The primary structure comprises 206 residues: Large ribosomal subunit protein uL4 (206 aa).

This sequence belongs to the universal ribosomal protein uL4 family. As to quaternary structure, part of the 50S ribosomal subunit.

Its function is as follows. One of the primary rRNA binding proteins, this protein initially binds near the 5'-end of the 23S rRNA. It is important during the early stages of 50S assembly. It makes multiple contacts with different domains of the 23S rRNA in the assembled 50S subunit and ribosome. Functionally, forms part of the polypeptide exit tunnel. This chain is Large ribosomal subunit protein uL4, found in Rhodopseudomonas palustris (strain HaA2).